A 404-amino-acid polypeptide reads, in one-letter code: Probable mannosyltransferase KTR3 (404 aa).

Residues 1-27 (MSVHHKKKLMPKSALLIRKYQKGIRSS) are Cytoplasmic-facing. A helical; Signal-anchor for type II membrane protein membrane pass occupies residues 28–44 (FIGLIIVLSFLFFMSGS). Residues 45-83 (RSPEVPIAQGTSVSRVASKDYLMPFTDKSQGVIHPVDDG) are stem region. The Lumenal segment spans residues 45–404 (RSPEVPIAQG…AGNYKLPPGI (360 aa)). Positions 84 to 404 (KKEKGVMVTL…AGNYKLPPGI (321 aa)) are catalytic. Glu295 acts as the Nucleophile in catalysis.

Belongs to the glycosyltransferase 15 family. Interacts with SVP26.

It is found in the membrane. In terms of biological role, possible glycosyltransferase that transfers an alpha-D-mannosyl residue from GDP-mannose into lipid-linked oligosaccharide, forming an alpha-(1-&gt;2)-D-mannosyl-D-mannose linkage. In Saccharomyces cerevisiae (strain ATCC 204508 / S288c) (Baker's yeast), this protein is Probable mannosyltransferase KTR3 (KTR3).